Consider the following 251-residue polypeptide: HTH-type transcriptional regulator UlaR (251 aa).

The 56-residue stretch at 3-58 folds into the HTH deoR-type domain; that stretch reads EAQRHQILLEMLAQLGFVTVEKVVERLGISPATARRDINKLDESGKLKKVRNGAEA. The segment at residues 20 to 39 is a DNA-binding region (H-T-H motif); sequence VTVEKVVERLGISPATARRD.

Its subcellular location is the cytoplasm. Its function is as follows. Represses ulaG and the ulaABCDEF operon. The protein is HTH-type transcriptional regulator UlaR of Shigella dysenteriae serotype 1 (strain Sd197).